Here is a 126-residue protein sequence, read N- to C-terminus: Activated RNA polymerase II transcriptional coactivator p15 (126 aa).

The segment at 1–63 (MPKSKELVSS…QSSNRDENMF (63 aa)) is disordered. A regulatory region spans residues 2 to 50 (PKSKELVSSSSSASDSDSEVDKKAKRKKQAAPEKPVKKQKTGESSKGAA). The span at 7 to 16 (LVSSSSSASD) shows a compositional bias: low complexity. Residues 31–44 (AAPEKPVKKQKTGE) are compositionally biased toward basic and acidic residues. The segment covering 45–55 (SSKGAASSKQS) has biased composition (low complexity). The interval 76-100 (FKGKVLIDIREYWMDQEGEMKPGRK) is interaction with ssDNA.

It belongs to the transcriptional coactivator PC4 family.

The protein resides in the nucleus. General coactivator that functions cooperatively with TAFs and mediates functional interactions between upstream activators and the general transcriptional machinery. May be involved in stabilizing the multiprotein transcription complex. Binds single-stranded DNA. Also binds, in vitro, non-specifically to double-stranded DNA (ds DNA). The polypeptide is Activated RNA polymerase II transcriptional coactivator p15 (SUB1) (Gallus gallus (Chicken)).